We begin with the raw amino-acid sequence, 270 residues long: Acyl-[acyl-carrier-protein]--UDP-N-acetylglucosamine O-acyltransferase (270 aa).

It belongs to the transferase hexapeptide repeat family. LpxA subfamily. Homotrimer.

Its subcellular location is the cytoplasm. The catalysed reaction is a (3R)-hydroxyacyl-[ACP] + UDP-N-acetyl-alpha-D-glucosamine = a UDP-3-O-[(3R)-3-hydroxyacyl]-N-acetyl-alpha-D-glucosamine + holo-[ACP]. The protein operates within glycolipid biosynthesis; lipid IV(A) biosynthesis; lipid IV(A) from (3R)-3-hydroxytetradecanoyl-[acyl-carrier-protein] and UDP-N-acetyl-alpha-D-glucosamine: step 1/6. Involved in the biosynthesis of lipid A, a phosphorylated glycolipid that anchors the lipopolysaccharide to the outer membrane of the cell. The polypeptide is Acyl-[acyl-carrier-protein]--UDP-N-acetylglucosamine O-acyltransferase (Helicobacter pylori (strain Shi470)).